Here is a 61-residue protein sequence, read N- to C-terminus: Photosystem II reaction center protein K (61 aa).

Positions 1 to 24 (MLNIFNLICICFNSALFSSSFLFA) are excised as a propeptide. A helical membrane pass occupies residues 36–56 (IVDFMPVIPVLFFLLAFVWQA).

This sequence belongs to the PsbK family. As to quaternary structure, PSII is composed of 1 copy each of membrane proteins PsbA, PsbB, PsbC, PsbD, PsbE, PsbF, PsbH, PsbI, PsbJ, PsbK, PsbL, PsbM, PsbT, PsbX, PsbY, PsbZ, Psb30/Ycf12, at least 3 peripheral proteins of the oxygen-evolving complex and a large number of cofactors. It forms dimeric complexes.

It is found in the plastid. Its subcellular location is the chloroplast thylakoid membrane. Its function is as follows. One of the components of the core complex of photosystem II (PSII). PSII is a light-driven water:plastoquinone oxidoreductase that uses light energy to abstract electrons from H(2)O, generating O(2) and a proton gradient subsequently used for ATP formation. It consists of a core antenna complex that captures photons, and an electron transfer chain that converts photonic excitation into a charge separation. The polypeptide is Photosystem II reaction center protein K (Gossypium barbadense (Sea Island cotton)).